We begin with the raw amino-acid sequence, 396 residues long: Na(+)/H(+) antiporter NhaA 1 (396 aa).

11 helical membrane passes run Leu18 to Leu38, Leu60 to Val80, Ile95 to Gly115, Gly126 to Gly146, Leu155 to Phe175, Ala178 to Leu198, Thr201 to Leu221, Val262 to Ile282, Ile295 to Val315, Gly333 to Leu353, and Ala362 to Leu382.

Belongs to the NhaA Na(+)/H(+) (TC 2.A.33) antiporter family.

The protein resides in the cell inner membrane. The catalysed reaction is Na(+)(in) + 2 H(+)(out) = Na(+)(out) + 2 H(+)(in). In terms of biological role, na(+)/H(+) antiporter that extrudes sodium in exchange for external protons. This chain is Na(+)/H(+) antiporter NhaA 1, found in Syntrophotalea carbinolica (strain DSM 2380 / NBRC 103641 / GraBd1) (Pelobacter carbinolicus).